The chain runs to 298 residues: Acetyl-coenzyme A carboxylase carboxyl transferase subunit beta 1 (298 aa).

The 269-residue stretch at 26-294 (MWVKCPSCGD…RAADVQNAPA (269 aa)) folds into the CoA carboxyltransferase N-terminal domain. Residues C30, C33, C49, and C51 each coordinate Zn(2+). Residues 30–51 (CPSCGDLIYTRQFSDNLKVCKC) form a C4-type zinc finger.

Belongs to the AccD/PCCB family. As to quaternary structure, acetyl-CoA carboxylase is a heterohexamer composed of biotin carboxyl carrier protein (AccB), biotin carboxylase (AccC) and two subunits each of ACCase subunit alpha (AccA) and ACCase subunit beta (AccD). Requires Zn(2+) as cofactor.

It localises to the cytoplasm. The enzyme catalyses N(6)-carboxybiotinyl-L-lysyl-[protein] + acetyl-CoA = N(6)-biotinyl-L-lysyl-[protein] + malonyl-CoA. Its pathway is lipid metabolism; malonyl-CoA biosynthesis; malonyl-CoA from acetyl-CoA: step 1/1. In terms of biological role, component of the acetyl coenzyme A carboxylase (ACC) complex. Biotin carboxylase (BC) catalyzes the carboxylation of biotin on its carrier protein (BCCP) and then the CO(2) group is transferred by the transcarboxylase to acetyl-CoA to form malonyl-CoA. This is Acetyl-coenzyme A carboxylase carboxyl transferase subunit beta 1 from Roseiflexus castenholzii (strain DSM 13941 / HLO8).